A 137-amino-acid chain; its full sequence is Large ribosomal subunit protein uL16 (137 aa).

Belongs to the universal ribosomal protein uL16 family. Part of the 50S ribosomal subunit.

In terms of biological role, binds 23S rRNA and is also seen to make contacts with the A and possibly P site tRNAs. The chain is Large ribosomal subunit protein uL16 from Ectopseudomonas mendocina (strain ymp) (Pseudomonas mendocina).